A 298-amino-acid polypeptide reads, in one-letter code: GTPase Era (298 aa).

Positions 3-170 (KSGFVTIVGR…VELMKKAMPE (168 aa)) constitute an Era-type G domain. Positions 11-18 (GRPNVGKS) are G1. Residue 11–18 (GRPNVGKS) participates in GTP binding. Positions 37–41 (QTTRN) are G2. Positions 58–61 (DTPG) are G3. Residues 58–62 (DTPGI) and 120–123 (NKVD) contribute to the GTP site. The G4 stretch occupies residues 120 to 123 (NKVD). The tract at residues 149-151 (ISA) is G5. One can recognise a KH type-2 domain in the interval 201–278 (LRDEVPHGIA…NLKIWVKVRK (78 aa)).

This sequence belongs to the TRAFAC class TrmE-Era-EngA-EngB-Septin-like GTPase superfamily. Era GTPase family. Monomer.

It is found in the cytoplasm. It localises to the cell membrane. In terms of biological role, an essential GTPase that binds both GDP and GTP, with rapid nucleotide exchange. Plays a role in 16S rRNA processing and 30S ribosomal subunit biogenesis and possibly also in cell cycle regulation and energy metabolism. This Clostridium beijerinckii (strain ATCC 51743 / NCIMB 8052) (Clostridium acetobutylicum) protein is GTPase Era.